The chain runs to 356 residues: Histidinol-phosphate aminotransferase (356 aa).

Lys214 is modified (N6-(pyridoxal phosphate)lysine).

The protein belongs to the class-II pyridoxal-phosphate-dependent aminotransferase family. Histidinol-phosphate aminotransferase subfamily. As to quaternary structure, homodimer. Pyridoxal 5'-phosphate serves as cofactor.

It carries out the reaction L-histidinol phosphate + 2-oxoglutarate = 3-(imidazol-4-yl)-2-oxopropyl phosphate + L-glutamate. It participates in amino-acid biosynthesis; L-histidine biosynthesis; L-histidine from 5-phospho-alpha-D-ribose 1-diphosphate: step 7/9. The chain is Histidinol-phosphate aminotransferase from Escherichia coli (strain 55989 / EAEC).